The following is a 163-amino-acid chain: Retinoic acid receptor responder protein 2 (163 aa).

The first 20 residues, 1 to 20 (MRRLLIPLALWLGAVGVGVA), serve as a signal peptide directing secretion. 3 disulfides stabilise this stretch: Cys-77-Cys-87, Cys-98-Cys-117, and Cys-101-Cys-135. Residues 158–163 (KALPRS) constitute a propeptide that is removed on maturation.

Post-translationally, secreted in an inactive precursor form, prochemerin, which is proteolytically processed by a variety of extracellular proteases to generate forms with differing levels of bioactivity. For example, the removal of six amino acids results in chemerin-157, which exhibits the highest activity, while removal of seven amino acids results in chemerin-156 which has slightly less activity. Some proteases are able to cleave at more than one site and chemerin forms may be sequentially processed by different enzymes to modulate activity levels. The coordinated expression and activity of chemerin-modifying enzymes is essential for regulating its bioactivation, inactivation and, consequently, biological function. Cathepsin G cleaves seven C-terminal amino acids from prochemerin (chemerin-156), elastase is able to cleave six (chemerin-157), eight (chemerin-155) or eleven (chemerin-152), plasmin cleaves five amino acids (chemerin-158), and tryptase cleaves five (chemerin-158) or eight (chemerin-155). Multiple cleavages might be required to fully activate chemerin, with an initial tryptase cleavage resulting in chemerin with low activity (chemerin-158), and a second cleavage by carboxypeptidase N or B producing highly active chemerin (chemerin-157). Expressed at the highest levels in placenta, liver, and white adipose tissue (WAT), and to a lesser extent in many other tissues such as lung, brown adipose tissue, heart, ovary, kidney, skeletal muscle and pancreas. Within WAT, expression is enriched in adipocytes as compared to the stromal vascular fraction. Expression and secretion increases dramatically with adipogenesis. Highly expressed in skin (basal and suprabasal layers of the epidermis, hair follicles and endothelial cells). Expression is elevated in numerous metabolic and inflammatory diseases including psoriasis, obesity, type 2 diabetes, metabolic syndrome and cardiovascular disease.

The protein resides in the secreted. Adipocyte-secreted protein (adipokine) that regulates adipogenesis, metabolism and inflammation through activation of the chemokine-like receptor 1 (CMKLR1). Also acts as a ligand for CMKLR2. Can also bind to C-C chemokine receptor-like 2 (CCRL2), but with a lower affinity than it does to CMKLR1 or CMKLR2. Positively regulates adipocyte differentiation, modulates the expression of adipocyte genes involved in lipid and glucose metabolism and might play a role in angiogenesis, a process essential for the expansion of white adipose tissue. Also acts as a pro-inflammatory adipokine, causing an increase in secretion of pro-inflammatory and prodiabetic adipokines, which further impair adipose tissue metabolic function and have negative systemic effects including impaired insulin sensitivity, altered glucose and lipid metabolism, and a decrease in vascular function in other tissues. Can have both pro- and anti-inflammatory properties depending on the modality of enzymatic cleavage by different classes of proteases. Acts as a chemotactic factor for leukocyte populations expressing CMKLR1, particularly immature plasmacytoid dendritic cells, but also immature myeloid DCs, macrophages and natural killer cells. Exerts an anti-inflammatory role by preventing TNF/TNFA-induced VCAM1 expression and monocytes adhesion in vascular endothelial cells. The effect is mediated via inhibiting activation of NF-kappa-B and CRK/p38 through stimulation of AKT1/NOS3 signaling and nitric oxide production. Its dual role in inflammation and metabolism might provide a link between chronic inflammation and obesity, as well as obesity-related disorders such as type 2 diabetes and cardiovascular disease. Exhibits an antimicrobial function in the skin. This is Retinoic acid receptor responder protein 2 (RARRES2) from Homo sapiens (Human).